The following is a 203-amino-acid chain: Outer-membrane lipoprotein carrier protein (203 aa).

The N-terminal stretch at 1-21 is a signal peptide; it reads MKKQLMTSCLFAAVLAAPAFA.

The protein belongs to the LolA family. In terms of assembly, monomer.

It is found in the periplasm. Functionally, participates in the translocation of lipoproteins from the inner membrane to the outer membrane. Only forms a complex with a lipoprotein if the residue after the N-terminal Cys is not an aspartate (The Asp acts as a targeting signal to indicate that the lipoprotein should stay in the inner membrane). In Sodalis glossinidius (strain morsitans), this protein is Outer-membrane lipoprotein carrier protein.